Reading from the N-terminus, the 245-residue chain is 5-oxoprolinase subunit A (245 aa).

This sequence belongs to the LamB/PxpA family. In terms of assembly, forms a complex composed of PxpA, PxpB and PxpC.

The catalysed reaction is 5-oxo-L-proline + ATP + 2 H2O = L-glutamate + ADP + phosphate + H(+). Catalyzes the cleavage of 5-oxoproline to form L-glutamate coupled to the hydrolysis of ATP to ADP and inorganic phosphate. The protein is 5-oxoprolinase subunit A of Serratia proteamaculans (strain 568).